The chain runs to 209 residues: Ribulose-phosphate 3-epimerase (209 aa).

Ser-8 lines the substrate pocket. Residues His-33, Asp-35, His-64, and Asp-170 each coordinate a divalent metal cation. Catalysis depends on Asp-35, which acts as the Proton acceptor. Substrate-binding positions include His-64, 170-172, and 191-192; these read DGG and GS. Catalysis depends on Asp-170, which acts as the Proton donor.

Belongs to the ribulose-phosphate 3-epimerase family. A divalent metal cation is required as a cofactor.

It carries out the reaction D-ribulose 5-phosphate = D-xylulose 5-phosphate. It participates in carbohydrate degradation. Its function is as follows. Catalyzes the reversible epimerization of D-ribulose 5-phosphate to D-xylulose 5-phosphate. The chain is Ribulose-phosphate 3-epimerase from Mycoplasma genitalium (strain ATCC 33530 / DSM 19775 / NCTC 10195 / G37) (Mycoplasmoides genitalium).